The sequence spans 231 residues: Putative Nudix hydrolase FPV054 (231 aa).

Residues Ser-74 to Phe-217 enclose the Nudix hydrolase domain. Residues Gly-125–Asp-146 carry the Nudix box motif. Residue Glu-131 participates in Mg(2+) binding. Glu-140 serves as the catalytic Nucleophile. Mg(2+) is bound by residues Glu-144 and Asp-165.

This sequence belongs to the Nudix hydrolase family. It depends on Mg(2+) as a cofactor. Mn(2+) serves as cofactor.

Functionally, decapping enzyme required for the removal of the 5'-end m7GpppN cap tethered to viral and host mRNAs to allow their decay in cells. May therefore accelerate viral and cellular mRNA turnover to eliminate competing host mRNAs and allow stage-specific synthesis of viral proteins. Acceleration of the turnover of cellular transcripts may even promote the shutoff of host protein synthesis. Does not cleave unmethylated RNAs or RNAs shorter than 24 nucleotides. This is Putative Nudix hydrolase FPV054 from Vertebrata (FPV).